We begin with the raw amino-acid sequence, 377 residues long: Chaperone protein DnaJ (377 aa).

Residues Asp5–Gly70 enclose the J domain. The CR-type zinc-finger motif lies at Gly137–Gln215. Residues Cys150, Cys153, Cys167, Cys170, Cys189, Cys192, Cys203, and Cys206 each coordinate Zn(2+). CXXCXGXG motif repeat units follow at residues Cys150–Gly157, Cys167–Gly174, Cys189–Gly196, and Cys203–Gly210.

It belongs to the DnaJ family. Homodimer. Zn(2+) serves as cofactor.

The protein resides in the cytoplasm. In terms of biological role, participates actively in the response to hyperosmotic and heat shock by preventing the aggregation of stress-denatured proteins and by disaggregating proteins, also in an autonomous, DnaK-independent fashion. Unfolded proteins bind initially to DnaJ; upon interaction with the DnaJ-bound protein, DnaK hydrolyzes its bound ATP, resulting in the formation of a stable complex. GrpE releases ADP from DnaK; ATP binding to DnaK triggers the release of the substrate protein, thus completing the reaction cycle. Several rounds of ATP-dependent interactions between DnaJ, DnaK and GrpE are required for fully efficient folding. Also involved, together with DnaK and GrpE, in the DNA replication of plasmids through activation of initiation proteins. This chain is Chaperone protein DnaJ, found in Cupriavidus taiwanensis (strain DSM 17343 / BCRC 17206 / CCUG 44338 / CIP 107171 / LMG 19424 / R1) (Ralstonia taiwanensis (strain LMG 19424)).